The primary structure comprises 1863 residues: E3 ubiquitin-protein ligase ubr3 (1863 aa).

The segment at 80-151 adopts a UBR-type zinc-finger fold; it reads TLCGLVWTAN…ESGFCNRHRL (72 aa). 3 disordered regions span residues 302-330, 970-995, and 1128-1152; these read LDDS…SSTK, PEVE…SATF, and IPPK…RARE. Composition is skewed to basic and acidic residues over residues 971-984 and 1134-1152; these read EVER…ERET and SPGD…RARE. An RING-type; degenerate zinc finger spans residues 1270 to 1328; the sequence is DSSCLQSVSIGWDGGVYVQTCGHTLHIDCHKSYMESLRNDQVLQGISVDKGEFTCPLCR.

It belongs to the E3 ubiquitin-protein ligase UBR1-like family.

The catalysed reaction is S-ubiquitinyl-[E2 ubiquitin-conjugating enzyme]-L-cysteine + [acceptor protein]-L-lysine = [E2 ubiquitin-conjugating enzyme]-L-cysteine + N(6)-ubiquitinyl-[acceptor protein]-L-lysine.. Its pathway is protein modification; protein ubiquitination. Functionally, E3 ubiquitin-protein ligase which is a component of the N-end rule pathway. Recognizes and binds to proteins bearing specific N-terminal residues, leading to their ubiquitination and subsequent degradation. Positively regulates hedgehog/shh-signaling pathways that function in eye development, neuronal specification and somite development. Activation of shh up-regulates transcription of ubr3, which in turn promotes hedgehog/shh signaling possibly by controlling negative regulators such as Kif7. The protein is E3 ubiquitin-protein ligase ubr3 of Danio rerio (Zebrafish).